A 568-amino-acid polypeptide reads, in one-letter code: DNA ligase (568 aa).

Glutamate 249 lines the ATP pocket. The active-site N6-AMP-lysine intermediate is lysine 251. ATP-binding residues include arginine 256, arginine 271, glutamate 301, phenylalanine 342, arginine 418, and lysine 424.

Belongs to the ATP-dependent DNA ligase family. It depends on Mg(2+) as a cofactor.

The enzyme catalyses ATP + (deoxyribonucleotide)n-3'-hydroxyl + 5'-phospho-(deoxyribonucleotide)m = (deoxyribonucleotide)n+m + AMP + diphosphate.. Functionally, DNA ligase that seals nicks in double-stranded DNA during DNA replication, DNA recombination and DNA repair. This is DNA ligase from Methanocella arvoryzae (strain DSM 22066 / NBRC 105507 / MRE50).